We begin with the raw amino-acid sequence, 248 residues long: 4-hydroxy-tetrahydrodipicolinate reductase (248 aa).

Residues 8 to 13 (GAKGRV), D34, 76 to 78 (GTT), and 103 to 106 (APNF) each bind NAD(+). Residue H133 is the Proton donor/acceptor of the active site. H134 provides a ligand contact to (S)-2,3,4,5-tetrahydrodipicolinate. Catalysis depends on K137, which acts as the Proton donor. A (S)-2,3,4,5-tetrahydrodipicolinate-binding site is contributed by 143–144 (GT).

Belongs to the DapB family.

It localises to the cytoplasm. It catalyses the reaction (S)-2,3,4,5-tetrahydrodipicolinate + NAD(+) + H2O = (2S,4S)-4-hydroxy-2,3,4,5-tetrahydrodipicolinate + NADH + H(+). The catalysed reaction is (S)-2,3,4,5-tetrahydrodipicolinate + NADP(+) + H2O = (2S,4S)-4-hydroxy-2,3,4,5-tetrahydrodipicolinate + NADPH + H(+). Its pathway is amino-acid biosynthesis; L-lysine biosynthesis via DAP pathway; (S)-tetrahydrodipicolinate from L-aspartate: step 4/4. Catalyzes the conversion of 4-hydroxy-tetrahydrodipicolinate (HTPA) to tetrahydrodipicolinate. The polypeptide is 4-hydroxy-tetrahydrodipicolinate reductase (Corynebacterium urealyticum (strain ATCC 43042 / DSM 7109)).